The following is a 458-amino-acid chain: MTLPSIAIIGRPNVGKSTLVNRLCQSNDAIVFDKPGVTRDRTYQNASWAGREFQVVDTGGLVFEDDSEFLPEIRTQVFLALEEASLALFVVDGNQGVTDGDLSIAKWLRNSACKTIVAVNKCESTSLGVSLASEFWKLGLGEPYPVSAIHGSGTGDLLDLVIDGFPKDLNVEDKEDKIMMSIIGRPNVGKSSLLNAICGEKRAIVSDISGTTTDSIDTLIKKDSHLWKIVDTAGIRRKKNVKYGTEFFGINRAFKSIDRSDVCVLVIDAIDGVTDQDQKLAGRIEEQGRACVIVVNKWDLVEKNNSTIYQVEKELRSKLYFLHWSKMIFISALTGQRVQNIFEHALSAVTQHRRRVTTSVVNEVLKEALGWKSPPTKRSGKQGRLYYGTQVKNQPPTFTLFVNDPKLFGITYRRYIEKQIRLNLGFEGSPIILLWRGKQQRDLEKETSKKNINIIQKD.

EngA-type G domains follow at residues 4 to 169 (PSIA…PKDL) and 178 to 353 (IMMS…TQHR). GTP is bound by residues 10-17 (GRPNVGKS), 57-61 (DTGGL), 120-123 (NKCE), 184-191 (GRPNVGKS), 231-235 (DTAGI), and 296-299 (NKWD). Residues 354–439 (RRVTTSVVNE…PIILLWRGKQ (86 aa)) form the KH-like domain.

It belongs to the TRAFAC class TrmE-Era-EngA-EngB-Septin-like GTPase superfamily. EngA (Der) GTPase family. As to quaternary structure, associates with the 50S ribosomal subunit.

Functionally, GTPase that plays an essential role in the late steps of ribosome biogenesis. This chain is GTPase Der, found in Prochlorococcus marinus subsp. pastoris (strain CCMP1986 / NIES-2087 / MED4).